The following is a 491-amino-acid chain: Cytochrome P450 2B2 (491 aa).

Position 128 is a phosphoserine; by PKA (Ser128). Position 436 (Cys436) interacts with heme.

This sequence belongs to the cytochrome P450 family. Requires heme as cofactor. Phosphorylation is accompanied by a decrease in enzyme activity.

Its subcellular location is the endoplasmic reticulum membrane. The protein resides in the microsome membrane. It catalyses the reaction an organic molecule + reduced [NADPH--hemoprotein reductase] + O2 = an alcohol + oxidized [NADPH--hemoprotein reductase] + H2O + H(+). Its function is as follows. Cytochromes P450 are a group of heme-thiolate monooxygenases. In liver microsomes, this enzyme is involved in an NADPH-dependent electron transport pathway. It oxidizes a variety of structurally unrelated compounds, including steroids, fatty acids, and xenobiotics. This is Cytochrome P450 2B2 (Cyp2b2) from Rattus norvegicus (Rat).